A 115-amino-acid chain; its full sequence is Nucleoid-associated protein Pro_0020 (115 aa).

It belongs to the YbaB/EbfC family. Homodimer.

The protein localises to the cytoplasm. It is found in the nucleoid. Binds to DNA and alters its conformation. May be involved in regulation of gene expression, nucleoid organization and DNA protection. This is Nucleoid-associated protein Pro_0020 from Prochlorococcus marinus (strain SARG / CCMP1375 / SS120).